Here is a 149-residue protein sequence, read N- to C-terminus: Transcriptional repressor NrdR (149 aa).

A zinc finger lies at 3–34 (CPFCNADDTKVIDSRLVADGHQVRRRRECLVC). An ATP-cone domain is found at 49 to 139 (PRVIKSNGVR…VYRSFEDIRE (91 aa)).

It belongs to the NrdR family. It depends on Zn(2+) as a cofactor.

In terms of biological role, negatively regulates transcription of bacterial ribonucleotide reductase nrd genes and operons by binding to NrdR-boxes. The protein is Transcriptional repressor NrdR of Tolumonas auensis (strain DSM 9187 / NBRC 110442 / TA 4).